The primary structure comprises 538 residues: Chaperonin GroEL (538 aa).

Residues 29–32 (TLGP), 86–90 (DGTTT), G413, 476–478 (NAA), and D492 contribute to the ATP site.

Belongs to the chaperonin (HSP60) family. Forms a cylinder of 14 subunits composed of two heptameric rings stacked back-to-back. Interacts with the co-chaperonin GroES.

The protein resides in the cytoplasm. It catalyses the reaction ATP + H2O + a folded polypeptide = ADP + phosphate + an unfolded polypeptide.. Together with its co-chaperonin GroES, plays an essential role in assisting protein folding. The GroEL-GroES system forms a nano-cage that allows encapsulation of the non-native substrate proteins and provides a physical environment optimized to promote and accelerate protein folding. The sequence is that of Chaperonin GroEL from Bacillus sp. (strain PS3).